A 302-amino-acid chain; its full sequence is MQAMLSSILDEVRPLIGLGKVADYIPALADVPANQLGIAVYGNDGSAYRAGDADTLFSVQSISKVFSLVQAIDHGGETIWERLGHEPSGQPFNSMVQLEFERGRPRNPFINAGALVICDINQSRFAVPILSMRDFVRRLSGNPHILVNSVVAESEAQHGARNAAMAYLMKSFGNFHNDVDAVLHSYFNYCALQMSCVDLAKAFSFLANEGTSAHSGEQILTARQTRQVNSIMATSGLYDEAGNFAYRVGLPGKSGVGGGIVAVVPGQFTVCVWSPELNAAGNSLAGMKALELLSERIGWSVF.

Positions 61, 111, 155, 162, 186, 238, and 256 each coordinate substrate.

This sequence belongs to the glutaminase family. As to quaternary structure, homotetramer.

It carries out the reaction L-glutamine + H2O = L-glutamate + NH4(+). The chain is Glutaminase from Pseudomonas fluorescens (strain SBW25).